The sequence spans 279 residues: Pantothenate synthetase (279 aa).

31-38 (MGNLHGGH) contributes to the ATP binding site. His-38 functions as the Proton donor in the catalytic mechanism. Gln-62 is a binding site for (R)-pantoate. Gln-62 contributes to the beta-alanine binding site. Position 150–153 (150–153 (GRKD)) interacts with ATP. Gln-156 is a binding site for (R)-pantoate. ATP is bound by residues Val-179 and 187–190 (KSSR).

This sequence belongs to the pantothenate synthetase family. In terms of assembly, homodimer.

Its subcellular location is the cytoplasm. It carries out the reaction (R)-pantoate + beta-alanine + ATP = (R)-pantothenate + AMP + diphosphate + H(+). It functions in the pathway cofactor biosynthesis; (R)-pantothenate biosynthesis; (R)-pantothenate from (R)-pantoate and beta-alanine: step 1/1. Functionally, catalyzes the condensation of pantoate with beta-alanine in an ATP-dependent reaction via a pantoyl-adenylate intermediate. This chain is Pantothenate synthetase, found in Stenotrophomonas maltophilia (strain K279a).